The sequence spans 50 residues: uncharacterized protein (50 aa).

This is an uncharacterized protein from Haemophilus influenzae (strain ATCC 51907 / DSM 11121 / KW20 / Rd).